The primary structure comprises 557 residues: Hemolysin transporter protein ShlB (557 aa).

An N-terminal signal peptide occupies residues 1–18 (MIKKITALTLLVSTALSA). The region spanning 79–152 (LPIAGVYLQG…GELGLSVTEG (74 aa)) is the POTRA domain.

Belongs to the TPS (TC 1.B.20) family.

It localises to the cell outer membrane. In terms of biological role, interacts with the cell-bound hemolysin. Necessary for the extracellular secretion and activation of hemolysin. Member of a two partner secretion pathway (TPS) in which it mediates the secretion of hemolysin. The polypeptide is Hemolysin transporter protein ShlB (shlB) (Serratia marcescens).